Here is a 367-residue protein sequence, read N- to C-terminus: Putative 12-oxophytodienoate reductase 11 (367 aa).

Residues P26–T28, A59, and Q101 each bind FMN. H178 to H181 serves as a coordination point for substrate. Y183 acts as the Proton donor in catalysis. R230 contacts FMN. Position 270 (R270) interacts with substrate. FMN contacts are provided by residues G300 and G321–R322.

The protein belongs to the NADH:flavin oxidoreductase/NADH oxidase family. Requires FMN as cofactor.

Putative oxophytodienoate reductase that may be involved in the biosynthesis or metabolism of oxylipin signaling molecules. The polypeptide is Putative 12-oxophytodienoate reductase 11 (OPR11) (Oryza sativa subsp. japonica (Rice)).